The primary structure comprises 561 residues: MSDNLRSRIVTQGSQRTPNRAMLRAVGFGDNDFIKPIVGVANGYSTITPCNMGLNDLALRAEAGLKSAGAMPQMFGTITISDGISMGTEGMKYSLVSREVIADSIETACNGQSMDGVIAIGGCDKNMPGAMIAIARMNIPAIFVYGGTIKPGHYQGEDLTVVSAFEAVGKYSAGKIDDNELLAIERNACPGAGSCGGMFTANTMSSAFEAMGMSLPYSSTMAAEDAEKADSTEQSAFVLVEAIRKQILPSQILTRKAFENAIAVIMAVGGSTNAVLHLLAIANTMGVELTIDDFETIRKKVPVLCDLKPSGRYVTVNLHQAGGIPQVMKMLLNHGLLHGDALTISGQTIAEVLQDIPDEPPANQDVIRPWNNPVYPEGHLAILKGNLAAEGAVAKISGVKKPKMTGPARVFESEEACLDAILAGKISAGDVVIVRYEGPKGGPGMREMLAPTSAIIGAGLGDSVGLITDGRFSGGTYGLVVGHVAPEAFVGGTIALVNEGDSVTIDAEKRLLQLNVSDEELATRRAHWTPPKPRYQRGILGKYAKLVSSSSLGAVTDVELF.

Position 50 (Cys-50) interacts with [2Fe-2S] cluster. Asp-82 serves as a coordination point for Mg(2+). Cys-123 contacts [2Fe-2S] cluster. Positions 124 and 125 each coordinate Mg(2+). Position 125 is an N6-carboxylysine (Lys-125). Cys-195 provides a ligand contact to [2Fe-2S] cluster. Position 447 (Glu-447) interacts with Mg(2+). The Proton acceptor role is filled by Ser-473.

Belongs to the IlvD/Edd family. As to quaternary structure, homodimer. [2Fe-2S] cluster is required as a cofactor. It depends on Mg(2+) as a cofactor.

The enzyme catalyses (2R)-2,3-dihydroxy-3-methylbutanoate = 3-methyl-2-oxobutanoate + H2O. It carries out the reaction (2R,3R)-2,3-dihydroxy-3-methylpentanoate = (S)-3-methyl-2-oxopentanoate + H2O. It participates in amino-acid biosynthesis; L-isoleucine biosynthesis; L-isoleucine from 2-oxobutanoate: step 3/4. The protein operates within amino-acid biosynthesis; L-valine biosynthesis; L-valine from pyruvate: step 3/4. Functionally, functions in the biosynthesis of branched-chain amino acids. Catalyzes the dehydration of (2R,3R)-2,3-dihydroxy-3-methylpentanoate (2,3-dihydroxy-3-methylvalerate) into 2-oxo-3-methylpentanoate (2-oxo-3-methylvalerate) and of (2R)-2,3-dihydroxy-3-methylbutanoate (2,3-dihydroxyisovalerate) into 2-oxo-3-methylbutanoate (2-oxoisovalerate), the penultimate precursor to L-isoleucine and L-valine, respectively. The polypeptide is Dihydroxy-acid dehydratase (Rippkaea orientalis (strain PCC 8801 / RF-1) (Cyanothece sp. (strain PCC 8801))).